The sequence spans 365 residues: Peptide chain release factor 2 (365 aa).

Q252 carries the post-translational modification N5-methylglutamine.

It belongs to the prokaryotic/mitochondrial release factor family. In terms of processing, methylated by PrmC. Methylation increases the termination efficiency of RF2.

It localises to the cytoplasm. Functionally, peptide chain release factor 2 directs the termination of translation in response to the peptide chain termination codons UGA and UAA. The chain is Peptide chain release factor 2 from Shewanella woodyi (strain ATCC 51908 / MS32).